The following is a 234-amino-acid chain: Kappa-casein (234 aa).

A signal peptide spans 1-21 (MMKSFLLVVNIVALTLPFLAA). 3 tandem repeats follow at residues 127 to 153 (LGKA…QPTV), 154 to 179 (SAGD…EEAR), and 180 to 207 (ESPE…PRES). Residues 127–207 (LGKATILSTD…AVPSEEPRES (81 aa)) are 3 X 27 AA tandem repeats. The segment at 143–234 (QTPVSAAQPT…STGPAIASMA (92 aa)) is disordered. Residue threonine 144 is glycosylated (O-linked (GalNAc...) threonine). Polar residues predominate over residues 144-171 (TPVSAAQPTVSAGDTPEVSSQFIDTPDT). A Phosphothreonine modification is found at threonine 158. Serine 162 bears the Phosphoserine; alternate mark. O-linked (GalNAc...) serine; alternate glycosylation occurs at serine 162.

This sequence belongs to the kappa-casein family. As to expression, mammary gland specific. Secreted in milk.

The protein resides in the secreted. In terms of biological role, kappa-casein stabilizes micelle formation, preventing casein precipitation in milk. The sequence is that of Kappa-casein (CSN3) from Cavia porcellus (Guinea pig).